The following is a 159-amino-acid chain: Aspartate carbamoyltransferase regulatory chain (159 aa).

Residues Cys-113, Cys-118, Cys-143, and Cys-146 each contribute to the Zn(2+) site.

It belongs to the PyrI family. As to quaternary structure, contains catalytic and regulatory chains. Zn(2+) serves as cofactor.

Involved in allosteric regulation of aspartate carbamoyltransferase. This is Aspartate carbamoyltransferase regulatory chain from Methanococcoides burtonii (strain DSM 6242 / NBRC 107633 / OCM 468 / ACE-M).